Here is a 446-residue protein sequence, read N- to C-terminus: Alkylglycerol monooxygenase (446 aa).

A run of 2 helical transmembrane segments spans residues 39 to 59 (VNQA…LGWL) and 103 to 123 (FHFL…FLGV). In terms of domain architecture, Fatty acid hydroxylase spans 117–248 (WLAFLGVDMG…LIIWDRMFGT (132 aa)). Residues 131–135 (HRFAH) carry the Histidine box-1 motif. A Histidine box-2 motif is present at residues 144 to 148 (HQVHH). A helical transmembrane segment spans residues 167 to 187 (FSSWIFYSPLALLIPPSVFAV). Positions 220–224 (HRVHH) match the Histidine box-3 motif. 3 helical membrane-spanning segments follow: residues 329–349 (AWSP…LDVY), 362–382 (LTVI…GFLI), and 410–430 (PLLP…TIYW).

Belongs to the sterol desaturase family. TMEM195 subfamily. Fe cation serves as cofactor.

The protein resides in the endoplasmic reticulum membrane. The catalysed reaction is 1-O-(1,2-saturated-alkyl)-sn-glycerol + (6R)-L-erythro-5,6,7,8-tetrahydrobiopterin + O2 = a 1-(1-hydroxyalkyl)-sn-glycerol + (6R)-L-erythro-6,7-dihydrobiopterin + H2O. Functionally, glyceryl-ether monooxygenase that cleaves the O-alkyl bond of ether lipids. Ether lipids are essential components of brain membranes. The chain is Alkylglycerol monooxygenase (agmo) from Danio rerio (Zebrafish).